Consider the following 184-residue polypeptide: MKNVTDSFVSLGHWPSAGSFGFNTDILATNPINLSVVLGVLIFFGKGVLSDLLDNRKQRILNTIQNSEELRGGAIEQLEKARSRLRKVETEAEQFRVNGYSEIEREKLNLINSTYKTLEQLENYKNETIQFEQQRAINQVRQRVFQQVLRGALGTLNSCLNNELHLRTISANIGMLGTMKEITD.

The chain crosses the membrane as a helical span at residues 27-49 (LATNPINLSVVLGVLIFFGKGVL).

The protein belongs to the ATPase B chain family. As to quaternary structure, F-type ATPases have 2 components, F(1) - the catalytic core - and F(0) - the membrane proton channel. F(1) has five subunits: alpha(3), beta(3), gamma(1), delta(1), epsilon(1). F(0) has four main subunits: a(1), b(1), b'(1) and c(10-14). The alpha and beta chains form an alternating ring which encloses part of the gamma chain. F(1) is attached to F(0) by a central stalk formed by the gamma and epsilon chains, while a peripheral stalk is formed by the delta, b and b' chains.

The protein resides in the plastid. Its subcellular location is the chloroplast thylakoid membrane. F(1)F(0) ATP synthase produces ATP from ADP in the presence of a proton or sodium gradient. F-type ATPases consist of two structural domains, F(1) containing the extramembraneous catalytic core and F(0) containing the membrane proton channel, linked together by a central stalk and a peripheral stalk. During catalysis, ATP synthesis in the catalytic domain of F(1) is coupled via a rotary mechanism of the central stalk subunits to proton translocation. In terms of biological role, component of the F(0) channel, it forms part of the peripheral stalk, linking F(1) to F(0). The chain is ATP synthase subunit b, chloroplastic from Nicotiana tomentosiformis (Tobacco).